The following is a 326-amino-acid chain: Microtubule-associated protein RP/EB family member 2 (326 aa).

Residue S9 is modified to Phosphoserine. The 103-residue stretch at 56–158 folds into the Calponin-homology (CH) domain; it reads TMSRHDIIAW…FIQWFKKFYD (103 aa). Residue Y166 is modified to Phosphotyrosine. Disordered regions lie at residues 170-239 and 298-326; these read EARQ…DKDL and ASDE…QEEY. The segment at 186-326 is DCTN1-binding; that stretch reads QIFNLPKKSH…EQQPQQQEEY (141 aa). Over residues 199–233 the composition is skewed to low complexity; that stretch reads SPTAGAAKSSPASKPGSTPSRPSSAKRASSSGSAS. Residues S218 and S235 each carry the phosphoserine modification. An EB1 C-terminal domain is found at 235–305; sequence SDKDLETQVI…LYASDEHEGH (71 aa). The interval 258 to 301 is APC-binding; it reads EGVEKERDFYFGKLREIELLCQEHGQENDDLVQRLMDVLYASDE. Residues 299–316 are compositionally biased toward basic and acidic residues; sequence SDEHEGHPEEPEAEEQVH. Low complexity predominate over residues 317–326; the sequence is EQQPQQQEEY.

The protein belongs to the MAPRE family. Interacts with DCTN1. Interacts with APC (via C-terminal). Interacts with monomeric and polymerized tubulin. Interacts with SLAIN1. Interacts (via the N-terminal region) with BAG1. Interacts with ASB14. Interacts with HAX1; this interaction is essential for epidermal cell migration. Post-translationally, phosphorylated at Ser-235 by CK2 leading to enhanced cell adhesion. Phosphorylated by CDK1 and AURKB during mitosis reduces the binding affinity of MAPRE2 for microtubules. In terms of processing, ubiquitinated in an ASB14-dependent manner; leading to proteasomal degradation.

It is found in the cytoplasm. The protein localises to the cytoskeleton. Functionally, adapter protein that is involved in microtubule polymerization, and spindle function by stabilizing microtubules and anchoring them at centrosomes. Therefore, ensures mitotic progression and genome stability. Acts as a central regulator of microtubule reorganization in apico-basal epithelial differentiation. Plays a role during oocyte meiosis by regulating microtubule dynamics. Participates in neurite growth by interacting with plexin B3/PLXNB3 and microtubule reorganization during apico-basal epithelial differentiation. Also plays an essential role for cell migration and focal adhesion dynamics. Mechanistically, recruits HAX1 to microtubules in order to regulate focal adhesion dynamics. The protein is Microtubule-associated protein RP/EB family member 2 (MAPRE2) of Bos taurus (Bovine).